The chain runs to 378 residues: Quinolinate synthase (378 aa).

His-59 and Ser-80 together coordinate iminosuccinate. Residue Cys-125 participates in [4Fe-4S] cluster binding. Iminosuccinate is bound by residues 151-153 and Ser-168; that span reads YAN. Cys-212 contributes to the [4Fe-4S] cluster binding site. Iminosuccinate-binding positions include 238–240 and Thr-255; that span reads HPE. Cys-309 contributes to the [4Fe-4S] cluster binding site.

The protein belongs to the quinolinate synthase family. Type 1 subfamily. Requires [4Fe-4S] cluster as cofactor.

It is found in the cytoplasm. The catalysed reaction is iminosuccinate + dihydroxyacetone phosphate = quinolinate + phosphate + 2 H2O + H(+). The protein operates within cofactor biosynthesis; NAD(+) biosynthesis; quinolinate from iminoaspartate: step 1/1. Its function is as follows. Catalyzes the condensation of iminoaspartate with dihydroxyacetone phosphate to form quinolinate. This chain is Quinolinate synthase, found in Burkholderia mallei (strain NCTC 10247).